The chain runs to 346 residues: MSMVSAFLKQAWFIENEEQEYIKAVKGSKGGPGSAVSPYPSFNPSSDVDALHKAITVKGVDEATIIEILTKRNNAQRQQIKAAYLQEKGKPLDEALKKALTGHLEDVALALLKTPARFDADELRAAMKGLGTDEDTLIEILTSRTNKEIREINRVYREELKRDLAKDITSDTSGDFQKALLSLAKGDRSEDFGVNDDLADSDARALYEAGERRKGTDVNVFNTILTTRSYPHLRRVFQMYTKYSKHDMNKVLDLEMKGDVENCFTAIVKCATSKPMFFAEKLHNAMKGAGTRDKILIRIMVSRSEVDMNDIKACYQKLYGISLCQAILDETKGDYEKILVALCGRD.

Position 5 is a phosphoserine; by TRPM7 (Ser5). An Isoglutamyl lysine isopeptide (Gln-Lys) (interchain with K-?) cross-link involves residue Gln19. The residue at position 21 (Tyr21) is a Phosphotyrosine; by EGFR. Phosphoserine is present on residues Ser34 and Ser37. 4 Annexin repeats span residues 42–113, 114–185, 197–269, and 273–344; these read FNPS…ALLK, TPAR…SLAK, DLAD…AIVK, and SKPM…ALCG. The residue at position 58 (Lys58) is an N6-acetyllysine. Ca(2+) is bound by residues Gly59, Val60, Glu62, Lys97, Leu100, Glu105, Met127, Gly129, Gly131, Thr132, and Glu134. Thr136 is subject to Phosphothreonine. 3 residues coordinate Ca(2+): Asp171, Gly210, and Arg213. A Glycyl lysine isopeptide (Lys-Gly) (interchain with G-Cter in SUMO1); alternate cross-link involves residue Lys214. Lys214 participates in a covalent cross-link: Glycyl lysine isopeptide (Lys-Gly) (interchain with G-Cter in SUMO2); alternate. The Ca(2+) site is built by Gly215, Asp253, Glu255, and Met256. A Glycyl lysine isopeptide (Lys-Gly) (interchain with G-Cter in SUMO1) cross-link involves residue Lys257. 4 residues coordinate Ca(2+): Glu261, Met286, Gly288, and Gly290. Position 312 is an N6-acetyllysine (Lys312). A disulfide bond links Cys324 and Cys343. Ca(2+)-binding residues include Leu328, Glu330, and Thr331. Lys332 is covalently cross-linked (Glycyl lysine isopeptide (Lys-Gly) (interchain with G-Cter in SUMO1)). Residue Glu336 coordinates Ca(2+).

This sequence belongs to the annexin family. Homodimer; non-covalently linked. Homodimer; linked by transglutamylation. Homodimers linked by transglutamylation are observed in placenta, but not in other tissues. Interacts with S100A11. Heterotetramer, formed by two molecules each of S100A11 and ANXA1. Interacts with DYSF. Interacts with EGFR. Post-translationally, phosphorylated by protein kinase C, EGFR and TRPM7. Phosphorylated in response to EGF treatment. Sumoylated. In terms of processing, proteolytically cleaved by cathepsin CTSG to release the active N-terminal peptide Ac2-26.

The protein resides in the nucleus. It localises to the cytoplasm. Its subcellular location is the cell projection. It is found in the cilium. The protein localises to the basolateral cell membrane. The protein resides in the lateral cell membrane. It localises to the cell membrane. Its subcellular location is the apical cell membrane. It is found in the membrane. The protein localises to the early endosome. The protein resides in the cytoplasmic vesicle membrane. It localises to the endosome membrane. Its subcellular location is the secreted. It is found in the extracellular space. The protein localises to the extracellular exosome. The protein resides in the cytoplasmic vesicle. It localises to the secretory vesicle lumen. Its subcellular location is the phagocytic cup. Plays important roles in the innate immune response as effector of glucocorticoid-mediated responses and regulator of the inflammatory process. Has anti-inflammatory activity. Plays a role in glucocorticoid-mediated down-regulation of the early phase of the inflammatory response. Contributes to the adaptive immune response by enhancing signaling cascades that are triggered by T-cell activation, regulates differentiation and proliferation of activated T-cells. Promotes the differentiation of T-cells into Th1 cells and negatively regulates differentiation into Th2 cells. Has no effect on unstimulated T-cells. Negatively regulates hormone exocytosis via activation of the formyl peptide receptors and reorganization of the actin cytoskeleton. Has high affinity for Ca(2+) and can bind up to eight Ca(2+) ions. Displays Ca(2+)-dependent binding to phospholipid membranes. Plays a role in the formation of phagocytic cups and phagosomes. Plays a role in phagocytosis by mediating the Ca(2+)-dependent interaction between phagosomes and the actin cytoskeleton. Its function is as follows. Functions at least in part by activating the formyl peptide receptors and downstream signaling cascades. Promotes chemotaxis of granulocytes and monocytes via activation of the formyl peptide receptors. Promotes rearrangement of the actin cytoskeleton, cell polarization and cell migration. Promotes resolution of inflammation and wound healing. Acts via neutrophil N-formyl peptide receptors to enhance the release of CXCL2. This chain is Annexin A1 (ANXA1), found in Equus caballus (Horse).